A 156-amino-acid chain; its full sequence is Ribosomal RNA large subunit methyltransferase H (156 aa).

S-adenosyl-L-methionine-binding positions include leucine 73, glycine 104, and 123–128 (LSALTL).

It belongs to the RNA methyltransferase RlmH family. In terms of assembly, homodimer.

It is found in the cytoplasm. It carries out the reaction pseudouridine(1915) in 23S rRNA + S-adenosyl-L-methionine = N(3)-methylpseudouridine(1915) in 23S rRNA + S-adenosyl-L-homocysteine + H(+). Its function is as follows. Specifically methylates the pseudouridine at position 1915 (m3Psi1915) in 23S rRNA. The chain is Ribosomal RNA large subunit methyltransferase H from Vibrio parahaemolyticus serotype O3:K6 (strain RIMD 2210633).